The sequence spans 87 residues: UPF0367 protein Syncc9902_0316 (87 aa).

This sequence belongs to the UPF0367 family.

The protein is UPF0367 protein Syncc9902_0316 of Synechococcus sp. (strain CC9902).